The primary structure comprises 858 residues: MTGDELRSAFLRFFEKKGHKILPSASLIPDDPQLLFTVAGMVPFKPIFWGKVEPVYTRVTTCQKCLRTNDIENVGRTPRHQTFFEMLGNFSFGDYFKKEAIIWAWEFVTEVLKLEKDRLWITVYEEDEESFKIWKDIVGVCEKKIIRMGKDTNFWGPAGPTGPCGPCSEIHYDTGLNEDCSDGECTPANSDKRFLEIWNLVFTEFYQDEKGALYPLPRKNIDTGAGLERVASVVQKVESNFETDIFKPIISKIEDVLGVEYKKDEQKDISIRVIADHSRAVSFLIADGVFPSNEERGYVLRRILRRAVRHGVLLGAQKPFLHLINETVIEHMGNTYSELKNRKDLILEVTRAEEERFFKTISQGNEMLRDIISRSSKVIDGEDVFKLYDTYGFPPDIVVDVAKDYNLKVDLEGFEKLMKIQRERARSARNNVEYAKSQEIYDELAQKSKTVFVGYDTLECEAKVIFLKKSGTKYEAVFDKTSFYAERGGQVSDVGQIVWDGGSASVEHVFIPVEGIIVHIINVEKGELKEGTKVRLIVDREKRLSTARNHTATHLLHAALRKVLGTHVKQAGSLVTPEKLRFDFTHHKPLTDNELMSIENMVNEIILRSIPVITEEKSYKEAVAEGAIALFGEKYGDVVRVVKVHSFSEELCGGTHVKNTGNIGLFRIVSESAISSGTRRIEAITGFNTLNYLRVKEQLVGNICEKLGTSQDEILSKIENLIEKNINLQKELQQFKSKLLVSQLKQTPFEQIKNIRFVHCVFNDIESNELRNLSDIAVAGENSTVALLFSTSKDKVNLIVRVTQDLAKKIKAGDIAKYAAQILEGGGGGRPDFAQAGGKDPSKINSVIEYTRKLLEQN.

Zn(2+) contacts are provided by His550, His554, Cys652, and His656.

It belongs to the class-II aminoacyl-tRNA synthetase family. Zn(2+) serves as cofactor.

Its subcellular location is the cytoplasm. The catalysed reaction is tRNA(Ala) + L-alanine + ATP = L-alanyl-tRNA(Ala) + AMP + diphosphate. Catalyzes the attachment of alanine to tRNA(Ala) in a two-step reaction: alanine is first activated by ATP to form Ala-AMP and then transferred to the acceptor end of tRNA(Ala). Also edits incorrectly charged Ser-tRNA(Ala) and Gly-tRNA(Ala) via its editing domain. The chain is Alanine--tRNA ligase from Pseudothermotoga lettingae (strain ATCC BAA-301 / DSM 14385 / NBRC 107922 / TMO) (Thermotoga lettingae).